A 241-amino-acid polypeptide reads, in one-letter code: Triosephosphate isomerase (241 aa).

Residue 9–11 (NWK) coordinates substrate. H96 acts as the Electrophile in catalysis. Catalysis depends on E165, which acts as the Proton acceptor. Substrate-binding positions include G171, S204, and 225–226 (GG).

It belongs to the triosephosphate isomerase family. In terms of assembly, homodimer.

Its subcellular location is the cytoplasm. It catalyses the reaction D-glyceraldehyde 3-phosphate = dihydroxyacetone phosphate. The protein operates within carbohydrate biosynthesis; gluconeogenesis. It functions in the pathway carbohydrate degradation; glycolysis; D-glyceraldehyde 3-phosphate from glycerone phosphate: step 1/1. Its function is as follows. Involved in the gluconeogenesis. Catalyzes stereospecifically the conversion of dihydroxyacetone phosphate (DHAP) to D-glyceraldehyde-3-phosphate (G3P). The chain is Triosephosphate isomerase from Gloeothece citriformis (strain PCC 7424) (Cyanothece sp. (strain PCC 7424)).